Here is an 87-residue protein sequence, read N- to C-terminus: Small ribosomal subunit protein bS20 (87 aa).

Positions 1–28 (MANSAQARKRARQASAQRDHNMSQRSEL) are disordered. Over residues 17–28 (QRDHNMSQRSEL) the composition is skewed to basic and acidic residues.

The protein belongs to the bacterial ribosomal protein bS20 family.

In terms of biological role, binds directly to 16S ribosomal RNA. This is Small ribosomal subunit protein bS20 from Thiobacillus denitrificans (strain ATCC 25259 / T1).